Here is a 38-residue protein sequence, read N- to C-terminus: ATP synthase subunit O, mitochondrial (38 aa).

This sequence belongs to the ATPase delta chain family. As to quaternary structure, F-type ATPases have 2 components, CF(1) - the catalytic core - and CF(0) - the membrane proton channel. CF(1) has five subunits: alpha(3), beta(3), gamma(1), delta(1), epsilon(1). CF(0) has three main subunits: a, b and c.

Its subcellular location is the mitochondrion. The protein localises to the mitochondrion inner membrane. Its function is as follows. Mitochondrial membrane ATP synthase (F(1)F(0) ATP synthase or Complex V) produces ATP from ADP in the presence of a proton gradient across the membrane which is generated by electron transport complexes of the respiratory chain. F-type ATPases consist of two structural domains, F(1) - containing the extramembraneous catalytic core and F(0) - containing the membrane proton channel, linked together by a central stalk and a peripheral stalk. During catalysis, ATP synthesis in the catalytic domain of F(1) is coupled via a rotary mechanism of the central stalk subunits to proton translocation. Part of the complex F(0) domain and the peripheric stalk, which acts as a stator to hold the catalytic alpha(3)beta(3) subcomplex and subunit a/ATP6 static relative to the rotary elements. This is ATP synthase subunit O, mitochondrial from Pisum sativum (Garden pea).